A 215-amino-acid chain; its full sequence is Probable phosphoglycerate mutase GpmB (215 aa).

Residues 8–15 (RHGETLWN), 21–22 (QG), arginine 58, 82–85 (ELNM), and 151–152 (GM) contribute to the substrate site. Catalysis depends on histidine 9, which acts as the Tele-phosphohistidine intermediate. Glutamate 82 acts as the Proton donor/acceptor in catalysis.

This sequence belongs to the phosphoglycerate mutase family. GpmB subfamily.

The enzyme catalyses (2R)-2-phosphoglycerate = (2R)-3-phosphoglycerate. Its pathway is carbohydrate degradation; glycolysis; pyruvate from D-glyceraldehyde 3-phosphate: step 3/5. In Yersinia pseudotuberculosis serotype O:1b (strain IP 31758), this protein is Probable phosphoglycerate mutase GpmB.